We begin with the raw amino-acid sequence, 75 residues long: Insecticidal toxin OcyC10 (75 aa).

The first 19 residues, Met1–Ala19, serve as a signal peptide directing secretion. Cystine bridges form between Cys50–Cys62 and Cys56–Cys68.

As to expression, expressed by the venom gland.

Its subcellular location is the secreted. In terms of biological role, insecticidal toxin. This is Insecticidal toxin OcyC10 from Opisthacanthus cayaporum (South American scorpion).